Here is a 311-residue protein sequence, read N- to C-terminus: 4-hydroxy-tetrahydrodipicolinate synthase (311 aa).

Pyruvate is bound at residue T51. Y140 serves as the catalytic Proton donor/acceptor. K168 (schiff-base intermediate with substrate) is an active-site residue. I209 contacts pyruvate.

Belongs to the DapA family. Homotetramer; dimer of dimers.

The protein localises to the cytoplasm. It catalyses the reaction L-aspartate 4-semialdehyde + pyruvate = (2S,4S)-4-hydroxy-2,3,4,5-tetrahydrodipicolinate + H2O + H(+). It participates in amino-acid biosynthesis; L-lysine biosynthesis via DAP pathway; (S)-tetrahydrodipicolinate from L-aspartate: step 3/4. In terms of biological role, catalyzes the condensation of (S)-aspartate-beta-semialdehyde [(S)-ASA] and pyruvate to 4-hydroxy-tetrahydrodipicolinate (HTPA). The sequence is that of 4-hydroxy-tetrahydrodipicolinate synthase from Streptococcus pneumoniae (strain Hungary19A-6).